The sequence spans 367 residues: Alanine racemase (367 aa).

The Proton acceptor; specific for D-alanine role is filled by lysine 40. An N6-(pyridoxal phosphate)lysine modification is found at lysine 40. Arginine 136 provides a ligand contact to substrate. Residue tyrosine 263 is the Proton acceptor; specific for L-alanine of the active site. Methionine 310 provides a ligand contact to substrate.

This sequence belongs to the alanine racemase family. The cofactor is pyridoxal 5'-phosphate.

The enzyme catalyses L-alanine = D-alanine. Its pathway is amino-acid biosynthesis; D-alanine biosynthesis; D-alanine from L-alanine: step 1/1. Catalyzes the interconversion of L-alanine and D-alanine. May also act on other amino acids. This Lactococcus lactis subsp. cremoris (strain MG1363) protein is Alanine racemase (alr).